The sequence spans 326 residues: Neuferricin homolog (326 aa).

Positions 1 to 34 (MDKNRRRTDDAGLMTKTLAGIAALVFFLSFICSS) are cleaved as a signal peptide. The Cytochrome b5 heme-binding domain occupies 98–197 (KHVFTPEQLH…KEYPLVGVVA (100 aa)).

Belongs to the cytochrome b5 family. MAPR subfamily.

It is found in the secreted. Its function is as follows. Heme-binding protein. This is Neuferricin homolog (tag-131) from Caenorhabditis elegans.